Consider the following 400-residue polypeptide: Tryptophan synthase beta chain (400 aa).

Lys-92 carries the post-translational modification N6-(pyridoxal phosphate)lysine.

This sequence belongs to the TrpB family. Tetramer of two alpha and two beta chains. The cofactor is pyridoxal 5'-phosphate.

The catalysed reaction is (1S,2R)-1-C-(indol-3-yl)glycerol 3-phosphate + L-serine = D-glyceraldehyde 3-phosphate + L-tryptophan + H2O. It functions in the pathway amino-acid biosynthesis; L-tryptophan biosynthesis; L-tryptophan from chorismate: step 5/5. Its function is as follows. The beta subunit is responsible for the synthesis of L-tryptophan from indole and L-serine. The chain is Tryptophan synthase beta chain from Leptospira borgpetersenii serovar Hardjo-bovis (strain JB197).